The primary structure comprises 545 residues: ATP synthase subunit alpha (545 aa).

173-180 (GDRQTGKT) provides a ligand contact to ATP.

Belongs to the ATPase alpha/beta chains family. F-type ATPases have 2 components, CF(1) - the catalytic core - and CF(0) - the membrane proton channel. CF(1) has five subunits: alpha(3), beta(3), gamma(1), delta(1), epsilon(1). CF(0) has three main subunits: a(1), b(2) and c(9-12). The alpha and beta chains form an alternating ring which encloses part of the gamma chain. CF(1) is attached to CF(0) by a central stalk formed by the gamma and epsilon chains, while a peripheral stalk is formed by the delta and b chains.

The protein resides in the cell membrane. The enzyme catalyses ATP + H2O + 4 H(+)(in) = ADP + phosphate + 5 H(+)(out). In terms of biological role, produces ATP from ADP in the presence of a proton gradient across the membrane. The alpha chain is a regulatory subunit. The polypeptide is ATP synthase subunit alpha (Paenarthrobacter aurescens (strain TC1)).